The chain runs to 372 residues: RNA polymerase sigma factor SigA (372 aa).

The interval 139–209 is sigma-70 factor domain-2; that stretch reads LAEANLRLVV…TRAIADQART (71 aa). Positions 163–166 match the Interaction with polymerase core subunit RpoC motif; sequence DLIQ. The sigma-70 factor domain-3 stretch occupies residues 218-294; the sequence is ETINKLIRVQ…DQDALAPSDA (77 aa). The segment at 307–360 is sigma-70 factor domain-4; sequence VLDTLTDREENVLRLRFGLDDGRTRTLEEVGKVFGVTRERIRQIEAKALRKLRH. A DNA-binding region (H-T-H motif) is located at residues 333–352; that stretch reads LEEVGKVFGVTRERIRQIEA.

Belongs to the sigma-70 factor family. RpoD/SigA subfamily. As to quaternary structure, interacts transiently with the RNA polymerase catalytic core.

It is found in the cytoplasm. Sigma factors are initiation factors that promote the attachment of RNA polymerase to specific initiation sites and are then released. This sigma factor is the primary sigma factor during exponential growth. The protein is RNA polymerase sigma factor SigA of Halalkalibacterium halodurans (strain ATCC BAA-125 / DSM 18197 / FERM 7344 / JCM 9153 / C-125) (Bacillus halodurans).